The following is a 380-amino-acid chain: Chaperone protein DnaJ (380 aa).

One can recognise a J domain in the interval 5 to 70; it reads DYYEVLGVER…SKRAAYDQYG (66 aa). A CR-type zinc finger spans residues 139-217; sequence GTTVNIRVPT…CHGEGRVEES (79 aa). Residues Cys152, Cys155, Cys169, Cys172, Cys191, Cys194, Cys205, and Cys208 each contribute to the Zn(2+) site. CXXCXGXG motif repeat units lie at residues 152–159, 169–176, 191–198, and 205–212; these read CKPCDGSG, CPTCGGIG, CPRCHGHG, and CDSCHGEG.

The protein belongs to the DnaJ family. As to quaternary structure, homodimer. Zn(2+) is required as a cofactor.

It is found in the cytoplasm. Functionally, participates actively in the response to hyperosmotic and heat shock by preventing the aggregation of stress-denatured proteins and by disaggregating proteins, also in an autonomous, DnaK-independent fashion. Unfolded proteins bind initially to DnaJ; upon interaction with the DnaJ-bound protein, DnaK hydrolyzes its bound ATP, resulting in the formation of a stable complex. GrpE releases ADP from DnaK; ATP binding to DnaK triggers the release of the substrate protein, thus completing the reaction cycle. Several rounds of ATP-dependent interactions between DnaJ, DnaK and GrpE are required for fully efficient folding. Also involved, together with DnaK and GrpE, in the DNA replication of plasmids through activation of initiation proteins. This Pseudomonas syringae pv. tomato (strain ATCC BAA-871 / DC3000) protein is Chaperone protein DnaJ.